A 533-amino-acid chain; its full sequence is Calcium uptake protein 1 homolog, mitochondrial (533 aa).

Residues 1–13 constitute a mitochondrion transit peptide; the sequence is MLRHNFRSSIFIR. The segment at 127 to 147 is disordered; it reads PFRPEASQKEESTDSGTEIEV. EF-hand domains follow at residues 270 to 305, 337 to 358, and 465 to 500; these read TSHA…IMSQ, KDGK…LQHD, and LSDH…RMRR. The Ca(2+) site is built by D283, D285, N287, and E294.

This sequence belongs to the MICU1 family. MICU1 subfamily.

The protein localises to the mitochondrion intermembrane space. The protein resides in the mitochondrion inner membrane. In terms of biological role, calcium sensor of the mitochondrial calcium uniporter (mcu-1) channel, which senses calcium level via its EF-hand domains. At low calcium levels, micu-1 occludes the pore of the mcu-1 channel, preventing mitochondrial calcium uptake. At higher calcium levels, calcium-binding to micu-1 induces a conformational change that weakens mcu-1-micu-1 interactions and moves micu-1 away from the pore, allowing calcium permeation through the mcu-1 channel. Also required to protect against manganese toxicity by preventing manganese uptake by mcu-1. Modulates the activity of the mitochondrial calcium uniporter protein mcu-1 depending on the level of intracellular calcium in PLM touch receptor neurons following axonal injury. In Caenorhabditis briggsae, this protein is Calcium uptake protein 1 homolog, mitochondrial.